The primary structure comprises 145 residues: Probable inactive ribonuclease-like protein 12 (145 aa).

Residues 1-19 (MVLMVVVFLLLLFWENELT) form the signal peptide.

Belongs to the pancreatic ribonuclease family.

The protein localises to the secreted. In terms of biological role, does not exhibit any ribonuclease activity. The chain is Probable inactive ribonuclease-like protein 12 (Rnase12) from Mus musculus (Mouse).